The sequence spans 688 residues: Probable xyloglucan glycosyltransferase 7 (688 aa).

The disordered stretch occupies residues 1-25 (MAPSWWGRSGGGGVGNGGGTPVVVK). The segment covering 8-20 (RSGGGGVGNGGGT) has biased composition (gly residues). The next 2 helical transmembrane spans lie at 121-141 (VSLVLSLLLLAVEVAAYLQGW) and 183-203 (VALFMVQSIDRLVLCLGCFWI). The active site involves Asp269. Asp328 and Asp330 together coordinate substrate. Asp422 is an active-site residue. Helical transmembrane passes span 500-520 (LILPFYSFTLFCVILPMTMFV) and 525-545 (LPAWVVCYIPATMSILNILPA). The interval 604 to 635 (HSKQQRVGSAPNLDALTKEESNPKKDSKKKKH) is disordered. The segment covering 619 to 628 (LTKEESNPKK) has biased composition (basic and acidic residues). 2 helical membrane-spanning segments follow: residues 638-657 (IYRKELALSFLLLTAAARSL) and 663-683 (IHFYFLLFQGVSFLVVGLDLI).

It belongs to the glycosyltransferase 2 family. Plant cellulose synthase-like C subfamily.

It is found in the golgi apparatus membrane. Probable beta-1,4-glucan synthase rather involved in the synthesis of the xyloglucan backbone than cellulose. Seems to work simultaneously with xyloglucan 6-xylosyltransferase. Xyloglucan is a noncellulosic polysaccharides of plant cell wall and consists of a glucan backbone substituted by xylose, galactose and fucose. The polypeptide is Probable xyloglucan glycosyltransferase 7 (CSLC7) (Oryza sativa subsp. japonica (Rice)).